The following is a 146-amino-acid chain: NADH-quinone oxidoreductase subunit A (146 aa).

3 helical membrane-spanning segments follow: residues 4 to 24, 63 to 83, and 91 to 111; these read IYHWGLIAFIVGILFLCVFML, LIAMFFVIFDVEGIYVYAWAI, and IGFSEIFIFIFILLVSLIYLI.

This sequence belongs to the complex I subunit 3 family. As to quaternary structure, NDH-1 is composed of 13 different subunits. Subunits NuoA, H, J, K, L, M, N constitute the membrane sector of the complex.

It localises to the cell inner membrane. The catalysed reaction is a quinone + NADH + 5 H(+)(in) = a quinol + NAD(+) + 4 H(+)(out). NDH-1 shuttles electrons from NADH, via FMN and iron-sulfur (Fe-S) centers, to quinones in the respiratory chain. The immediate electron acceptor for the enzyme in this species is believed to be ubiquinone. Couples the redox reaction to proton translocation (for every two electrons transferred, four hydrogen ions are translocated across the cytoplasmic membrane), and thus conserves the redox energy in a proton gradient. This chain is NADH-quinone oxidoreductase subunit A, found in Blochmanniella pennsylvanica (strain BPEN).